We begin with the raw amino-acid sequence, 557 residues long: Large cysteine-rich periplasmic protein omcB (557 aa).

An N-terminal signal peptide occupies residues 1 to 22 (MSKLIRRVVTVLALTSMASSFA). Residues 23-40 (SGKIEAAAAESLATRFIA) constitute a propeptide that is removed on maturation.

In terms of assembly, part of a disulfide cross-linked outer membrane complex (COMC) composed of the major outer membrane porin (MOMP), the small cysteine-rich protein (omcA) and the large cysteine-rich periplasmic protein (omcB).

The protein resides in the periplasm. In elementary bodies (EBs, the infectious stage, which is able to survive outside the host cell) provides the structural integrity of the outer envelope through disulfide cross-links with the small cysteine-rich protein and the major outer membrane porin. It has been described in publications as the Sarkosyl-insoluble COMC (Chlamydia outer membrane complex), and serves as the functional equivalent of peptidoglycan. This chain is Large cysteine-rich periplasmic protein omcB (omcB), found in Chlamydia psittaci (Chlamydophila psittaci).